Reading from the N-terminus, the 160-residue chain is Endoribonuclease YbeY (160 aa).

Zn(2+)-binding residues include His-125, His-129, and His-135.

It belongs to the endoribonuclease YbeY family. Zn(2+) serves as cofactor.

It localises to the cytoplasm. Single strand-specific metallo-endoribonuclease involved in late-stage 70S ribosome quality control and in maturation of the 3' terminus of the 16S rRNA. In Dehalococcoides mccartyi (strain ATCC BAA-2100 / JCM 16839 / KCTC 5957 / BAV1), this protein is Endoribonuclease YbeY.